Here is a 295-residue protein sequence, read N- to C-terminus: UDP-N-acetylenolpyruvoylglucosamine reductase (295 aa).

The region spanning 26–189 (VGGRADVLFK…VEAEFKGVNS (164 aa)) is the FAD-binding PCMH-type domain. R169 is a catalytic residue. C218 acts as the Proton donor in catalysis. E288 is an active-site residue.

It belongs to the MurB family. It depends on FAD as a cofactor.

It localises to the cytoplasm. It carries out the reaction UDP-N-acetyl-alpha-D-muramate + NADP(+) = UDP-N-acetyl-3-O-(1-carboxyvinyl)-alpha-D-glucosamine + NADPH + H(+). It participates in cell wall biogenesis; peptidoglycan biosynthesis. In terms of biological role, cell wall formation. This is UDP-N-acetylenolpyruvoylglucosamine reductase from Wolbachia pipientis wMel.